The chain runs to 240 residues: NKG2-E type II integral membrane protein (240 aa).

Residues 1-12 are compositionally biased toward polar residues; sequence MSKQRGTFSEVS. Positions 1 to 31 are disordered; that stretch reads MSKQRGTFSEVSLAQDPKWQQRKPKGNKSSI. Residues 1-70 are Cytoplasmic-facing; it reads MSKQRGTFSE…CQGLLPPPEK (70 aa). Residues 71 to 93 traverse the membrane as a helical; Signal-anchor for type II membrane protein segment; sequence LTAEVLGIICIVLMATVLKTIVL. Over 94 to 240 the chain is Extracellular; sequence IPFLEQNNSS…IMLTRLVLNS (147 aa). N-linked (GlcNAc...) asparagine glycosylation occurs at Asn100. Residues 116 to 230 form the C-type lectin domain; it reads HCPEEWITYS…GSSRIIRRGF (115 aa). A disulfide bond links Cys117 and Cys128. Asn149 and Asn179 each carry an N-linked (GlcNAc...) asparagine glycan. A disulfide bridge connects residues Cys207 and Cys220.

Can form disulfide-bonded heterodimer with CD94. As to expression, natural killer cells.

Its subcellular location is the membrane. Functionally, plays a role as a receptor for the recognition of MHC class I HLA-E molecules by NK cells and some cytotoxic T-cells. This chain is NKG2-E type II integral membrane protein (KLRC3), found in Homo sapiens (Human).